Here is a 406-residue protein sequence, read N- to C-terminus: Phosphopentomutase (406 aa).

The Mn(2+) site is built by D10, D305, H310, D346, H347, and H358.

It belongs to the phosphopentomutase family. The cofactor is Mn(2+).

It is found in the cytoplasm. It catalyses the reaction 2-deoxy-alpha-D-ribose 1-phosphate = 2-deoxy-D-ribose 5-phosphate. The catalysed reaction is alpha-D-ribose 1-phosphate = D-ribose 5-phosphate. The protein operates within carbohydrate degradation; 2-deoxy-D-ribose 1-phosphate degradation; D-glyceraldehyde 3-phosphate and acetaldehyde from 2-deoxy-alpha-D-ribose 1-phosphate: step 1/2. Isomerase that catalyzes the conversion of deoxy-ribose 1-phosphate (dRib-1-P) and ribose 1-phosphate (Rib-1-P) to deoxy-ribose 5-phosphate (dRib-5-P) and ribose 5-phosphate (Rib-5-P), respectively. In Vibrio cholerae serotype O1 (strain ATCC 39315 / El Tor Inaba N16961), this protein is Phosphopentomutase.